Reading from the N-terminus, the 590-residue chain is Nuclear receptor subfamily 2 group C member 1 (590 aa).

Residues 1-166 (MATIEEIAHQ…RLQRCIAFGM (166 aa)) form a required for interaction with KAT2B region. The nuclear receptor DNA-binding region spans 98–173 (FDLCVVCGDK…FGMKQDSVQC (76 aa)). 2 consecutive NR C4-type zinc fingers follow at residues 101–121 (CVVC…CEGC) and 137–156 (CRGS…CQYC). Ser185 and Ser203 each carry phosphoserine. The residue at position 208 (Thr208) is a Phosphothreonine. Position 210 is a phosphothreonine; by MAPK1 (Thr210). Lys238 participates in a covalent cross-link: Glycyl lysine isopeptide (Lys-Gly) (interchain with G-Cter in SUMO); alternate. Residue Lys238 forms a Glycyl lysine isopeptide (Lys-Gly) (interchain with G-Cter in SUMO2); alternate linkage. One can recognise an NR LBD domain in the interval 333–577 (EGMEGSPHLI…SVIPHILKME (245 aa)). 2 positions are modified to phosphoserine; by PKC: Ser461 and Ser568. Positions 571-590 (PHILKMEPADYNSQIIGHSL) are required for interaction with NRIP1. Lys575 participates in a covalent cross-link: Glycyl lysine isopeptide (Lys-Gly) (interchain with G-Cter in SUMO2).

This sequence belongs to the nuclear hormone receptor family. NR2 subfamily. Homodimer. Heterodimer; with NR2C2 which is required for chromatin remodeling and for binding to promoter regions such as globin DR1 repeats. Interacts with ESR1; the interaction prevents homodimerization of ESR1 and suppresses its transcriptional activity and cell growth. Interacts with NRIP1 (via its LXXLL motifs); the interaction provides corepressor activity. Interacts with HDAC3 (via the DNA-binding domain); the interaction recruits phosphorylated NR2C1 to PML bodies for sumoylation. Interacts with HDAC4 (via the DNA-binding domain). Interacts with PIAS1; the interaction is required for sumoylation of NR2C1. Interacts with UBE2I; the interaction is required for sumoylation of NR2C1. Interacts with KAT2B; the interaction acts as a corepressor of gene expression. Sumoylation requires both PIAS1 and UBE2I. Sumoylation appears to dissociate NR2C1 from the PML nuclear bodies. Enhances the interaction with NRIP1 but inhibits interaction with KAT2B. In proliferating cells, stimulation by all-trans retinoic acid, activation of MAPK1-mediated phosphorylation and recruitment to PML bodies with subsequent sumoylation, suppresses OCT4 expression. In terms of processing, phosphorylated on several serine and threonine residues. Phosphorylation on Thr-210, stimulated by all-trans retinoic acid (atRA) mediates PML location and sumoylation in proliferating cells which then modulates its association with effector molecules, KAT2B and NRIP1. Phosphorylation on Ser-568 by PKC is important for protein stability and function as activator of RARB. In terms of tissue distribution, isoform 1 is highly expressed in the adlumenal compartment of the seminiferous tubule of adult testes (at protein level) and in the eyes of newborn animals. Weakly expressed in other adult organs including the seminal vesicle, prostate, ovary, adrenal gland, heart, thymus, placenta and brain. Expressed during embryonic stages in developing eyes, brain and cartilage primordia (at protein level). Also expressed in the developing spinal motor neurons and in the sympathetic-, parasympathetic- and sensory ganglia of the embryonic PNS. Expressed in the developing neural epithelia of the inner ear, nasal cavity, tongue and retina. At day 16.5, expressed in various tissues including kidney and intestine. In contrast, isoform 2 is widely expressed at a low level throughout the adult testis.

The protein resides in the nucleus. The protein localises to the PML body. Orphan nuclear receptor. Binds the IR7 element in the promoter of its own gene in an autoregulatory negative feedback mechanism. Primarily repressor of a broad range of genes including ESR1 and RARB. Together with NR2C2, forms the core of the DRED (direct repeat erythroid-definitive) complex that represses embryonic and fetal globin transcription. Binds to hormone response elements (HREs) consisting of two 5'-AGGTCA-3' half site direct repeat consensus sequences. Also activator of OCT4 gene expression. Plays a fundamental role in early embryogenesis and regulates embryonic stem cell proliferation and differentiation. Mediator of retinoic acid-regulated preadipocyte proliferation. The protein is Nuclear receptor subfamily 2 group C member 1 of Mus musculus (Mouse).